The sequence spans 217 residues: Peptide methionine sulfoxide reductase MsrA (217 aa).

The active site involves Cys56.

The protein belongs to the MsrA Met sulfoxide reductase family.

The enzyme catalyses L-methionyl-[protein] + [thioredoxin]-disulfide + H2O = L-methionyl-(S)-S-oxide-[protein] + [thioredoxin]-dithiol. It catalyses the reaction [thioredoxin]-disulfide + L-methionine + H2O = L-methionine (S)-S-oxide + [thioredoxin]-dithiol. In terms of biological role, has an important function as a repair enzyme for proteins that have been inactivated by oxidation. Catalyzes the reversible oxidation-reduction of methionine sulfoxide in proteins to methionine. The sequence is that of Peptide methionine sulfoxide reductase MsrA from Corynebacterium melassecola.